The sequence spans 306 residues: 3-methyl-2-oxobutanoate hydroxymethyltransferase (306 aa).

Mg(2+) contacts are provided by Asp53 and Asp96. 3-methyl-2-oxobutanoate is bound by residues 53-54 (DS), Asp96, and Lys126. Position 128 (Glu128) interacts with Mg(2+). Glu195 serves as the catalytic Proton acceptor.

Belongs to the PanB family. Homodecamer; pentamer of dimers. Requires Mg(2+) as cofactor.

The protein localises to the cytoplasm. It catalyses the reaction 3-methyl-2-oxobutanoate + (6R)-5,10-methylene-5,6,7,8-tetrahydrofolate + H2O = 2-dehydropantoate + (6S)-5,6,7,8-tetrahydrofolate. The protein operates within cofactor biosynthesis; (R)-pantothenate biosynthesis; (R)-pantoate from 3-methyl-2-oxobutanoate: step 1/2. Catalyzes the reversible reaction in which hydroxymethyl group from 5,10-methylenetetrahydrofolate is transferred onto alpha-ketoisovalerate to form ketopantoate. This chain is 3-methyl-2-oxobutanoate hydroxymethyltransferase, found in Anaeromyxobacter dehalogenans (strain 2CP-1 / ATCC BAA-258).